The following is a 364-amino-acid chain: UDP-N-acetylglucosamine--N-acetylmuramyl-(pentapeptide) pyrophosphoryl-undecaprenol N-acetylglucosamine transferase (364 aa).

UDP-N-acetyl-alpha-D-glucosamine is bound by residues 15–17 (TGG), Asn123, Arg164, Ser191, and Gln286.

It belongs to the glycosyltransferase 28 family. MurG subfamily.

It localises to the cell inner membrane. The enzyme catalyses di-trans,octa-cis-undecaprenyl diphospho-N-acetyl-alpha-D-muramoyl-L-alanyl-D-glutamyl-meso-2,6-diaminopimeloyl-D-alanyl-D-alanine + UDP-N-acetyl-alpha-D-glucosamine = di-trans,octa-cis-undecaprenyl diphospho-[N-acetyl-alpha-D-glucosaminyl-(1-&gt;4)]-N-acetyl-alpha-D-muramoyl-L-alanyl-D-glutamyl-meso-2,6-diaminopimeloyl-D-alanyl-D-alanine + UDP + H(+). Its pathway is cell wall biogenesis; peptidoglycan biosynthesis. Cell wall formation. Catalyzes the transfer of a GlcNAc subunit on undecaprenyl-pyrophosphoryl-MurNAc-pentapeptide (lipid intermediate I) to form undecaprenyl-pyrophosphoryl-MurNAc-(pentapeptide)GlcNAc (lipid intermediate II). This chain is UDP-N-acetylglucosamine--N-acetylmuramyl-(pentapeptide) pyrophosphoryl-undecaprenol N-acetylglucosamine transferase, found in Prochlorococcus marinus (strain MIT 9515).